Consider the following 134-residue polypeptide: MSWQAYVDDHLMCDIEGHEDHRLTAAAIVGHDGSVWAQSATFPQFKPEEMNGIMTDFSEPGHLAPTGLHLGGTKYMVVQGEAGAVIRGKKGSGGITIKKTGQALVFGIYEEPVTPGQCNMVVERLGDYLLEQGL.

C13 and C118 are disulfide-bonded. An Involved in PIP2 interaction motif is present at residues 84-100 (AVIRGKKGSGGITIKKT). Position 114 is a phosphothreonine (T114).

Belongs to the profilin family. As to quaternary structure, occurs in many kinds of cells as a complex with monomeric actin in a 1:1 ratio. Phosphorylated by MAP kinases.

The protein resides in the cytoplasm. Its subcellular location is the cytoskeleton. Functionally, binds to actin and affects the structure of the cytoskeleton. At high concentrations, profilin prevents the polymerization of actin, whereas it enhances it at low concentrations. The chain is Profilin-2 from Olea europaea (Common olive).